The following is a 643-amino-acid chain: Fructose-1,6-bisphosphatase class 3 (643 aa).

The protein belongs to the FBPase class 3 family. Mn(2+) serves as cofactor.

The enzyme catalyses beta-D-fructose 1,6-bisphosphate + H2O = beta-D-fructose 6-phosphate + phosphate. It functions in the pathway carbohydrate biosynthesis; gluconeogenesis. The protein is Fructose-1,6-bisphosphatase class 3 of Lacticaseibacillus paracasei (strain ATCC 334 / BCRC 17002 / CCUG 31169 / CIP 107868 / KCTC 3260 / NRRL B-441) (Lactobacillus paracasei).